Reading from the N-terminus, the 1420-residue chain is MDQNQQQQQQQQQQQQQQQQQQQQQQQQQQQQQQQQQQQQQQQPPNGMMPMNGEQTTPIIPQNRNISLSLVIHRLVEQSYNSLLGLTEGLPKANDLERKKAIVDYLDGTREKFLRLMVLIKWSEHVPTLTKANNIIDILNLEDSYLREAADLLINTQFSLVNARAPIYDVPTAIDVLTTGTYQRMPTNIKRVIPPPPLKPTQIESALERLNDIIKYKLFISDVPKEFQPITVSDGKAHIFVDDEYEAYLTIDGGSEKSNWVILSLNLFVYSKRNLNGEGPIKVAYDNKMKYVLDRVQNRIISSAQPLFELHNIVHYLCISSQMDILASQVENLKKTILKNNIRCVFGKDQSITVFYWLPEDFNLVGVTQHTLGNLMPNKHTNFKIYIDEHQKIKISHYPPITHPKNENYFKIASLNLETILLQAIELNAYDKVYLLNSLLLDNRITANTTSSSSSSSSNNNNTASPIINRNNNNGKPNLLSTKQSNNPLSRSFHLNDIKLIMSSRFSDENQNDSNGNNDHLPTVLRVMLYGSKFLDITVNFQNGKFSLIKSSNYIEFTNHLEQRLNKDPNEIESIVNVFKLKSLLTCFEEASLFLGLECFNKIPLQMNSSNNSESNQLANELFSDSNFICVSISLAKENNPYYLVISIKATCFTPSFHLLFCKMLPKSTIMTLDSIIKLESDQLNKLLKECPIGSISSSNNTNSNGNGPFQSYISTLLEKIVEASNQKINLLSIQSFLKKENINYYQPSQQDIENNNNNNNNNNNNNNNNNNNNNNNNNNNNNNNNNNNNNNGNNGYKNNGITTTTSIVFLFNEQQIQKISPFLSNHISHQTPITISFKNGFYTLSFTQQRPFEYKKYGSGSNININSFGENNSNENYIYRKGNWIFKYQQTSDWFNSFCNDLMTISKITNISSQLLKQMETLEIYKQLITHLTIKPMSIEFVCFVGSNQTRTNVIMFVEKKTAEIKLSFQPYSNPLLVYLEKDINQSPTNDITNSLRAIINSNDISVYINSLISPLELSFYLPLEILVIPRSICQIRLLYKNLYGIDIKLISHEYCAISDSFYSLNSSKQVRLTSINQLHSFMEQRVSLQALDNPTGHRTSWLLPIKQFQKTISRIFIYLNSLNTLKFAQNLMKPNFQPLVPSNPSSQKFSNDYFIVSFSIRDYTSFDIDVTNKNLENSVPSNEELALFCQYFKKKVQQLNYRSQTIGSCIQMLTLPPKILWEFIRVLLEITGPKFDGYTIEISLNTSSIHSKNKESFFHIPDENQVYFILRYLNSSRTDIIPPDQFTDIPIIYNYNEKSIRYWNKLDSNSTSSSSSSTLPKKSLSIVEEVKQKFVEEVAKLIPDALNASSGKSSPISIFFKSFLPKIKPIFSNPTASTLLLIQQQQQQQQQQQQQQQQQQQQQQIENNNFASASSSIR.

Residues 1-43 (MDQNQQQQQQQQQQQQQQQQQQQQQQQQQQQQQQQQQQQQQQQ) are a coiled coil. 2 stretches are compositionally biased toward low complexity: residues 1–43 (MDQN…QQQQ) and 449–474 (TTSS…NNNN). Disordered stretches follow at residues 1–59 (MDQN…TTPI), 449–490 (TTSS…NPLS), 750–799 (QQDI…GYKN), and 1389–1420 (QQQQ…SSIR). Polar residues predominate over residues 475–490 (GKPNLLSTKQSNNPLS). Low complexity-rich tracts occupy residues 755-795 (NNNN…NGNN) and 1389-1406 (QQQQ…QQQQ). A coiled-coil region spans residues 1382–1412 (LLIQQQQQQQQQQQQQQQQQQQQQQIENNNF). Residues 1407 to 1420 (IENNNFASASSSIR) are compositionally biased toward polar residues.

The protein belongs to the Mediator complex subunit 14 family. As to quaternary structure, component of the Mediator complex.

It localises to the nucleus. Component of the Mediator complex, a coactivator involved in the regulated transcription of nearly all RNA polymerase II-dependent genes. Mediator functions as a bridge to convey information from gene-specific regulatory proteins to the basal RNA polymerase II transcription machinery. Mediator is recruited to promoters by direct interactions with regulatory proteins and serves as a scaffold for the assembly of a functional preinitiation complex with RNA polymerase II and the general transcription factors. The polypeptide is Putative mediator of RNA polymerase II transcription subunit 14 (med14) (Dictyostelium discoideum (Social amoeba)).